Reading from the N-terminus, the 379-residue chain is ATP phosphoribosyltransferase regulatory subunit (379 aa).

It belongs to the class-II aminoacyl-tRNA synthetase family. HisZ subfamily. In terms of assembly, heteromultimer composed of HisG and HisZ subunits.

Its subcellular location is the cytoplasm. Its pathway is amino-acid biosynthesis; L-histidine biosynthesis; L-histidine from 5-phospho-alpha-D-ribose 1-diphosphate: step 1/9. Functionally, required for the first step of histidine biosynthesis. May allow the feedback regulation of ATP phosphoribosyltransferase activity by histidine. The polypeptide is ATP phosphoribosyltransferase regulatory subunit (Sinorhizobium fredii (strain NBRC 101917 / NGR234)).